The sequence spans 291 residues: Phosphatidylglycerol--prolipoprotein diacylglyceryl transferase (291 aa).

7 helical membrane passes run valine 21–alanine 41, leucine 60–tyrosine 80, tryptophan 96–phenylalanine 116, phenylalanine 130–glycine 150, serine 198–isoleucine 218, glycine 225–phenylalanine 245, and isoleucine 260–tryptophan 280. Arginine 143 serves as a coordination point for a 1,2-diacyl-sn-glycero-3-phospho-(1'-sn-glycerol).

This sequence belongs to the Lgt family.

The protein resides in the cell inner membrane. It catalyses the reaction L-cysteinyl-[prolipoprotein] + a 1,2-diacyl-sn-glycero-3-phospho-(1'-sn-glycerol) = an S-1,2-diacyl-sn-glyceryl-L-cysteinyl-[prolipoprotein] + sn-glycerol 1-phosphate + H(+). Its pathway is protein modification; lipoprotein biosynthesis (diacylglyceryl transfer). In terms of biological role, catalyzes the transfer of the diacylglyceryl group from phosphatidylglycerol to the sulfhydryl group of the N-terminal cysteine of a prolipoprotein, the first step in the formation of mature lipoproteins. The protein is Phosphatidylglycerol--prolipoprotein diacylglyceryl transferase of Salmonella newport (strain SL254).